Here is a 229-residue protein sequence, read N- to C-terminus: UPF0758 protein Fjoh_0413 (229 aa).

Residues 107 to 229 (KITSSKDAFT…YYSFVDEGIF (123 aa)) form the MPN domain. Zn(2+)-binding residues include H178, H180, and D191. A JAMM motif motif is present at residues 178–191 (HNHPSGELNPSQAD).

It belongs to the UPF0758 family.

The protein is UPF0758 protein Fjoh_0413 of Flavobacterium johnsoniae (strain ATCC 17061 / DSM 2064 / JCM 8514 / BCRC 14874 / CCUG 350202 / NBRC 14942 / NCIMB 11054 / UW101) (Cytophaga johnsonae).